We begin with the raw amino-acid sequence, 518 residues long: Myosin-binding protein 7 (518 aa).

The 99-residue stretch at 69–167 folds into the GTD-binding domain; sequence NELELLRETV…ALTFEAQAYK (99 aa). Positions 276-350 are disordered; the sequence is VVGQSPRHQR…DSSEIGDNDM (75 aa). Low complexity predominate over residues 291 to 301; the sequence is STGSASSLLGT. The span at 310-320 shows a compositional bias: polar residues; sequence SNDSPRSNNGS. Position 385 is a phosphoserine (serine 385). Residues 399-431 are a coiled coil; the sequence is EISKLYMRLQALEADRESMRQAIMSMRTEKAQM. A helical membrane pass occupies residues 458–477; sequence IIGAFNFISVFKWITSFVFW.

Interacts with myosin XI-I.

It localises to the endomembrane system. Membrane-anchored myosin receptors that define a distinct, plant-specific transport vesicle compartment. This is Myosin-binding protein 7 from Arabidopsis thaliana (Mouse-ear cress).